A 98-amino-acid chain; its full sequence is UPF0473 protein GTNG_2486 (98 aa).

It belongs to the UPF0473 family.

The protein is UPF0473 protein GTNG_2486 of Geobacillus thermodenitrificans (strain NG80-2).